The primary structure comprises 470 residues: Uronate isomerase (470 aa).

Belongs to the metallo-dependent hydrolases superfamily. Uronate isomerase family.

The enzyme catalyses D-glucuronate = D-fructuronate. It carries out the reaction aldehydo-D-galacturonate = keto-D-tagaturonate. It functions in the pathway carbohydrate metabolism; pentose and glucuronate interconversion. The protein is Uronate isomerase of Escherichia fergusonii (strain ATCC 35469 / DSM 13698 / CCUG 18766 / IAM 14443 / JCM 21226 / LMG 7866 / NBRC 102419 / NCTC 12128 / CDC 0568-73).